A 387-amino-acid polypeptide reads, in one-letter code: Succinate--CoA ligase [ADP-forming] subunit beta (387 aa).

ATP-binding positions include Lys46, 53-55, Glu99, Ala102, and Glu107; that span reads GRG. The Mg(2+) site is built by Asn199 and Asp213. Residues Asn264 and 321 to 323 contribute to the substrate site; that span reads GIV.

It belongs to the succinate/malate CoA ligase beta subunit family. Heterotetramer of two alpha and two beta subunits. It depends on Mg(2+) as a cofactor.

The catalysed reaction is succinate + ATP + CoA = succinyl-CoA + ADP + phosphate. It carries out the reaction GTP + succinate + CoA = succinyl-CoA + GDP + phosphate. The protein operates within carbohydrate metabolism; tricarboxylic acid cycle; succinate from succinyl-CoA (ligase route): step 1/1. Its function is as follows. Succinyl-CoA synthetase functions in the citric acid cycle (TCA), coupling the hydrolysis of succinyl-CoA to the synthesis of either ATP or GTP and thus represents the only step of substrate-level phosphorylation in the TCA. The beta subunit provides nucleotide specificity of the enzyme and binds the substrate succinate, while the binding sites for coenzyme A and phosphate are found in the alpha subunit. This Campylobacter jejuni (strain RM1221) protein is Succinate--CoA ligase [ADP-forming] subunit beta.